A 57-amino-acid chain; its full sequence is Exactin (57 aa).

Intrachain disulfides connect Cys-3–Cys-19, Cys-12–Cys-37, Cys-41–Cys-49, and Cys-50–Cys-55.

Belongs to the three-finger toxin family. Short-chain subfamily. Orphan group XX sub-subfamily. As to expression, expressed by the venom gland.

It localises to the secreted. Functionally, anticoagulant protein that prevents the activation of factor X (F10). It acts by potently inhibiting the extrinsic tenase complex (ETC) (IC(50)=116.49 nM), a complex composed by active factor VII (F7a), tissue factor (TF) and F10. In addition, it shows weaker activities on other complexes. It weakly inhibits F10 activation by inhibiting the intrinsic tenase complex (IC(50)=4.05 uM), a complex composed by active factor IX (IXa, F9a), its cofactor factor VIII (VIIIa, F8a), and their substrate F10. It also weakly prevents prothrombin activation by inhibiting the prothrombinase complex (IC(50)=17.66 uM). It shows high kinetic constant towards F7a/TF/F10/phospholipids complex (Ki=30.62 nM) and lower kinetic constant towards F7a/TF/phospholipids complex (Ki=153.75 nM). This Hemachatus haemachatus (Rinkhals) protein is Exactin.